Consider the following 29-residue polypeptide: YCQFKMWTCDSERKCCEDMVCRLWCKLNL.

3 disulfide bridges follow: C2-C16, C9-C21, and C15-C25.

This sequence belongs to the neurotoxin 30 (phrixotoxin) family. Expressed by the venom gland.

The protein localises to the secreted. Functionally, both insecticidal and vertebrate neurotoxin that potently blocks insect calcium-activated potassium (BKCa) channels (Slo-type) in cockroach dorsal unpaired median (DUM) neurons (IC(50)=24.6 nM). This occurs in the absence of any shifts in the voltage dependence of activation. May interact with the turret and/or loop region of the external entrance to the channel and does not project deeply into the pore of the channel. Also shows toxicity to mice by introcerebroventicular injection. The sequence is that of Lambda-theraphotoxin-Ec2c from Eucratoscelus constrictus (African red-rump baboon spider).